The chain runs to 374 residues: tRNA (guanine(26)-N(2))-dimethyltransferase (374 aa).

The 367-residue stretch at 1-367 (MILKEGEVVF…ATLKNVIEAI (367 aa)) folds into the Trm1 methyltransferase domain. S-adenosyl-L-methionine-binding residues include arginine 34, arginine 66, aspartate 86, aspartate 113, and alanine 114.

The protein belongs to the class I-like SAM-binding methyltransferase superfamily. Trm1 family.

The catalysed reaction is guanosine(26) in tRNA + 2 S-adenosyl-L-methionine = N(2)-dimethylguanosine(26) in tRNA + 2 S-adenosyl-L-homocysteine + 2 H(+). In terms of biological role, dimethylates a single guanine residue at position 26 of a number of tRNAs using S-adenosyl-L-methionine as donor of the methyl groups. This chain is tRNA (guanine(26)-N(2))-dimethyltransferase, found in Methanocaldococcus jannaschii (strain ATCC 43067 / DSM 2661 / JAL-1 / JCM 10045 / NBRC 100440) (Methanococcus jannaschii).